Consider the following 251-residue polypeptide: Enolase-phosphatase E1 (251 aa).

Residues Asp13 and Glu15 each contribute to the Mg(2+) site. Residues 137–138 and Lys183 each bind substrate; that span reads SS. Asp210 provides a ligand contact to Mg(2+).

Belongs to the HAD-like hydrolase superfamily. MasA/MtnC family. Monomer. Mg(2+) serves as cofactor.

Its subcellular location is the cytoplasm. The protein resides in the nucleus. It catalyses the reaction 5-methylsulfanyl-2,3-dioxopentyl phosphate + H2O = 1,2-dihydroxy-5-(methylsulfanyl)pent-1-en-3-one + phosphate. Its pathway is amino-acid biosynthesis; L-methionine biosynthesis via salvage pathway; L-methionine from S-methyl-5-thio-alpha-D-ribose 1-phosphate: step 3/6. It participates in amino-acid biosynthesis; L-methionine biosynthesis via salvage pathway; L-methionine from S-methyl-5-thio-alpha-D-ribose 1-phosphate: step 4/6. In terms of biological role, bifunctional enzyme that catalyzes the enolization of 2,3-diketo-5-methylthiopentyl-1-phosphate (DK-MTP-1-P) into the intermediate 2-hydroxy-3-keto-5-methylthiopentenyl-1-phosphate (HK-MTPenyl-1-P), which is then dephosphorylated to form the acireductone 1,2-dihydroxy-3-keto-5-methylthiopentene (DHK-MTPene). In Candida glabrata (strain ATCC 2001 / BCRC 20586 / JCM 3761 / NBRC 0622 / NRRL Y-65 / CBS 138) (Yeast), this protein is Enolase-phosphatase E1.